The sequence spans 2476 residues: Transcriptional regulator ATRX (2476 aa).

Lys-10 participates in a covalent cross-link: Glycyl lysine isopeptide (Lys-Gly) (interchain with G-Cter in SUMO2). The segment at His-24 to Asp-154 is disordered. 2 positions are modified to phosphoserine: Ser-25 and Ser-34. The span at Met-40 to Met-57 shows a compositional bias: polar residues. Residues Glu-58–Arg-72 are compositionally biased toward basic and acidic residues. A Phosphotyrosine modification is found at Tyr-89. Ser-92 carries the phosphoserine modification. Positions Thr-98–Ala-107 are enriched in basic and acidic residues. Polar residues predominate over residues Thr-108 to Pro-121. At Ser-111 the chain carries Phosphoserine. Over residues Asn-134–Asp-154 the composition is skewed to basic and acidic residues. Glycyl lysine isopeptide (Lys-Gly) (interchain with G-Cter in SUMO2) cross-links involve residues Lys-137 and Lys-141. Residues Lys-158 to Lys-295 form the ADD domain. The segment at Ser-169–Ser-205 adopts a GATA-type; atypical zinc-finger fold. Ser-212 is subject to Phosphoserine. The PHD-type; atypical zinc-finger motif lies at Asp-216–Pro-271. A Glycyl lysine isopeptide (Lys-Gly) (interchain with G-Cter in SUMO2) cross-link involves residue Lys-298. Ser-315 bears the Phosphoserine mark. Disordered stretches follow at residues Glu-427–Tyr-451, Ser-466–Met-507, and Glu-525–Ser-568. Lys-439 participates in a covalent cross-link: Glycyl lysine isopeptide (Lys-Gly) (interchain with G-Cter in SUMO2). Residues Ser-466–Ser-494 show a composition bias toward basic and acidic residues. Over residues Glu-549–Ser-559 the composition is skewed to polar residues. A PxVxL motif motif is present at residues Lys-573–Ser-586. Thr-583 is subject to Phosphothreonine. Disordered stretches follow at residues Val-585 to Ile-877 and Pro-893 to Lys-1464. Residues Ser-586, Ser-590, Ser-626, Ser-663, Ser-665, Ser-717, and Ser-719 each carry the phosphoserine modification. The segment covering Ser-615–Asn-630 has biased composition (basic and acidic residues). Polar residues predominate over residues Met-732 to Gln-746. 7 positions are modified to phosphoserine: Ser-766, Ser-801, Ser-828, Ser-829, Ser-854, Ser-855, and Ser-871. The span at Ser-819–Thr-849 shows a compositional bias: basic and acidic residues. The span at Gly-899–Lys-922 shows a compositional bias: basic and acidic residues. The segment covering Glu-923–Lys-937 has biased composition (basic residues). 2 positions are modified to phosphoserine: Ser-941 and Ser-953. A compositionally biased stretch (basic and acidic residues) spans Gly-943–Gln-963. The segment covering Ser-964–Lys-973 has biased composition (basic residues). Over residues Lys-974–Glu-988 the composition is skewed to basic and acidic residues. A Glycyl lysine isopeptide (Lys-Gly) (interchain with G-Cter in SUMO2) cross-link involves residue Lys-984. 4 positions are modified to phosphoserine: Ser-991, Ser-992, Ser-993, and Ser-1041. A compositionally biased stretch (basic and acidic residues) spans Asp-1031–Lys-1061. The span at Thr-1062–Phe-1074 shows a compositional bias: basic residues. Arg-1063 is modified (citrulline). Composition is skewed to basic and acidic residues over residues Lys-1083 to Leu-1096 and Ser-1103 to Lys-1129. Positions Lys-1146 to Arg-1175 are enriched in basic residues. An interaction with DAXX region spans residues Leu-1169 to Ser-1313. Phosphoserine occurs at positions 1223, 1224, and 1232. Residues Pro-1246–Lys-1260 are compositionally biased toward basic and acidic residues. Over residues Ser-1265–Asp-1276 the composition is skewed to acidic residues. Ser-1309, Ser-1311, and Ser-1313 each carry phosphoserine. Basic residues predominate over residues Pro-1321 to Leu-1332. A phosphoserine mark is found at Ser-1335 and Ser-1339. Basic and acidic residues-rich tracts occupy residues Gly-1340–Gly-1355 and Lys-1395–Arg-1404. The span at Tyr-1406–Ile-1415 shows a compositional bias: basic residues. Residues Lys-1416–Gly-1436 are compositionally biased toward basic and acidic residues. A compositionally biased stretch (acidic residues) spans Asp-1437–Asp-1453. Residue Lys-1473 forms a Glycyl lysine isopeptide (Lys-Gly) (interchain with G-Cter in SUMO2) linkage. Ser-1512 is subject to Phosphoserine. Thr-1514 is subject to Phosphothreonine. One can recognise a Helicase ATP-binding domain in the interval Lys-1566–Asn-1753. Residue His-1579–Thr-1586 participates in ATP binding. The DEGH box motif lies at Asp-1704–His-1707. Phosphoserine occurs at positions 1891 and 1898. Positions Ser-1898 to Pro-1982 are disordered. The span at Glu-1902 to Lys-1913 shows a compositional bias: basic and acidic residues. Lys-1965 participates in a covalent cross-link: Glycyl lysine isopeptide (Lys-Gly) (interchain with G-Cter in SUMO1); alternate. Lys-1965 is covalently cross-linked (Glycyl lysine isopeptide (Lys-Gly) (interchain with G-Cter in SUMO2); alternate). A Glycyl lysine isopeptide (Lys-Gly) (interchain with G-Cter in SUMO2) cross-link involves residue Lys-1970. Low complexity predominate over residues Thr-1971–Pro-1982. 2 positions are modified to phosphoserine: Ser-1975 and Ser-1979. An interaction with MECP2 region spans residues Asp-1993–Ala-2263. The 181-residue stretch at Glu-2008–Thr-2188 folds into the Helicase C-terminal domain. Ser-2203 carries the phosphoserine modification. The disordered stretch occupies residues Ser-2445–Met-2476. Over residues Gln-2451 to Thr-2462 the composition is skewed to pro residues. 2 positions are modified to omega-N-methylarginine: Arg-2457 and Arg-2464.

Belongs to the SNF2/RAD54 helicase family. Interacts with DAXX to form the chromatin remodeling complex ATRX:DAXX. Probably binds EZH2. Binds annexin V in a calcium and phosphatidylcholine/phosphatidylserine-dependent manner. Interacts directly with CBX5 via the PxVxL motif. Interacts with RAD50, MRE11 and NBN; indicative for an association with the MRN complex. Interacts with histone MACROH2A1. Interacts with histone H3 peptides methylated at 'Lys-10' with preferences H3K9me3 &gt; H3K9me2 &gt; H3K9me1. Interacts with histone H3 peptides unmethylated at 'Lys-5' (H3K4me0). Interacts with MECP2, SMC1 and SMC3. Interacts with SETDB1, TRIM28 and ZNF274. Citrullinated by PADI4.

It localises to the nucleus. Its subcellular location is the chromosome. It is found in the telomere. The protein resides in the PML body. The catalysed reaction is ATP + H2O = ADP + phosphate + H(+). Functionally, involved in transcriptional regulation and chromatin remodeling. Facilitates DNA replication in multiple cellular environments and is required for efficient replication of a subset of genomic loci. Binds to DNA tandem repeat sequences in both telomeres and euchromatin and in vitro binds DNA quadruplex structures. May help stabilizing G-rich regions into regular chromatin structures by remodeling G4 DNA and incorporating H3.3-containing nucleosomes. Catalytic component of the chromatin remodeling complex ATRX:DAXX which has ATP-dependent DNA translocase activity and catalyzes the replication-independent deposition of histone H3.3 in pericentric DNA repeats outside S-phase and telomeres, and the in vitro remodeling of H3.3-containing nucleosomes. Its heterochromatin targeting is proposed to involve a combinatorial readout of histone H3 modifications (specifically methylation states of H3K9 and H3K4) and association with CBX5. Involved in maintaining telomere structural integrity in embryonic stem cells probably implying recruitment of CBX5 to telomeres. Reports on the involvement in transcriptional regulation of telomeric repeat-containing RNA (TERRA) are conflicting; according is required for its transcriptional repression in embryonic stem cells. Acts as a negative regulator of chromatin incorporation of transcriptionally repressive histone MACROH2A1, particularily at telomeres. Participates in the allele-specific gene expression at the imprinted IGF2/H19 gene locus. On the maternal allele, required for the chromatin occupancy of SMC1 and CTCTF within the H19 imprinting control region (ICR) and involved in esatblishment of histone tails modifications in the ICR. Binds to zinc-finger coding genes with atypical chromatin signatures and regulates its H3K9me3 levels. Forms a complex with ZNF274, TRIM28 and SETDB1 to facilitate the deposition and maintenance of H3K9me3 at the 3' exons of zinc-finger genes. This chain is Transcriptional regulator ATRX (Atrx), found in Mus musculus (Mouse).